The chain runs to 538 residues: Protein NRT1/ PTR FAMILY 5.11 (538 aa).

A run of 2 helical transmembrane segments spans residues 44 to 64 (FAYF…LGES) and 74 to 94 (AWTG…DSYL). Phosphothreonine is present on Thr99. The next 10 membrane-spanning stretches (helical) occupy residues 100–120 (IIIS…STMI), 134–154 (TIFF…NPCI), 175–194 (SFFN…TRLV), 204–224 (WSLG…LFLL), 308–328 (IPIW…PTFF), 342–362 (GLLV…VVFI), 389–409 (IGTG…VETK), 424–444 (VWWL…TMVG), 463–483 (ALNL…ISVI), and 507–527 (YFYW…LWFA).

This sequence belongs to the major facilitator superfamily. Proton-dependent oligopeptide transporter (POT/PTR) (TC 2.A.17) family. Expressed in shoots and roots.

It localises to the membrane. The sequence is that of Protein NRT1/ PTR FAMILY 5.11 (NPF5.11) from Arabidopsis thaliana (Mouse-ear cress).